The sequence spans 466 residues: Cysteine--tRNA ligase (466 aa).

Cysteine 29 is a binding site for Zn(2+). The 'HIGH' region signature appears at 31-41; it reads ATVQAAPHIGH. 3 residues coordinate Zn(2+): cysteine 208, histidine 233, and glutamate 237. The 'KMSKS' region motif lies at 264-268; it reads KMSKS. Lysine 267 is an ATP binding site.

The protein belongs to the class-I aminoacyl-tRNA synthetase family. As to quaternary structure, monomer. The cofactor is Zn(2+).

It localises to the cytoplasm. It catalyses the reaction tRNA(Cys) + L-cysteine + ATP = L-cysteinyl-tRNA(Cys) + AMP + diphosphate. This is Cysteine--tRNA ligase from Streptomyces avermitilis (strain ATCC 31267 / DSM 46492 / JCM 5070 / NBRC 14893 / NCIMB 12804 / NRRL 8165 / MA-4680).